The chain runs to 174 residues: Putative FAS1 domain-containing protein 096L (174 aa).

The region spanning 36–171 (PDTLWSKLNE…GIIHLMEEVY (136 aa)) is the FAS1 domain.

The chain is Putative FAS1 domain-containing protein 096L from Acheta domesticus (House cricket).